The following is a 125-amino-acid chain: NADPH-dependent 7-cyano-7-deazaguanine reductase (125 aa).

Cys41 (thioimide intermediate) is an active-site residue. Asp48 serves as the catalytic Proton donor. Residues 63-65 and 82-83 each bind substrate; these read VEL and HE.

This sequence belongs to the GTP cyclohydrolase I family. QueF type 1 subfamily.

The protein localises to the cytoplasm. The catalysed reaction is 7-aminomethyl-7-carbaguanine + 2 NADP(+) = 7-cyano-7-deazaguanine + 2 NADPH + 3 H(+). It functions in the pathway tRNA modification; tRNA-queuosine biosynthesis. Functionally, catalyzes the NADPH-dependent reduction of 7-cyano-7-deazaguanine (preQ0) to 7-aminomethyl-7-deazaguanine (preQ1). The polypeptide is NADPH-dependent 7-cyano-7-deazaguanine reductase (Sulfurimonas denitrificans (strain ATCC 33889 / DSM 1251) (Thiomicrospira denitrificans (strain ATCC 33889 / DSM 1251))).